The following is a 199-amino-acid chain: Probable GTP-binding protein EngB (199 aa).

In terms of domain architecture, EngB-type G spans 28–199 (DLPEIALAGR…DSWDAILEQV (172 aa)). Residues 36–43 (GRSNVGKS), 63–67 (GKTQL), 81–84 (DVPG), 148–151 (TKAD), and 180–182 (FSS) contribute to the GTP site. S43 and T65 together coordinate Mg(2+).

It belongs to the TRAFAC class TrmE-Era-EngA-EngB-Septin-like GTPase superfamily. EngB GTPase family. Mg(2+) serves as cofactor.

Its function is as follows. Necessary for normal cell division and for the maintenance of normal septation. The polypeptide is Probable GTP-binding protein EngB (Streptococcus pyogenes serotype M6 (strain ATCC BAA-946 / MGAS10394)).